Reading from the N-terminus, the 164-residue chain is Coenzyme Q-binding protein coq10, mitochondrial (164 aa).

It belongs to the COQ10 family. In terms of assembly, interacts with coenzyme Q.

It is found in the mitochondrion inner membrane. Functionally, required for the function of coenzyme Q in the respiratory chain. May serve as a chaperone or may be involved in the transport of Q6 from its site of synthesis to the catalytic sites of the respiratory complexes. This is Coenzyme Q-binding protein coq10, mitochondrial from Schizosaccharomyces pombe (strain 972 / ATCC 24843) (Fission yeast).